A 613-amino-acid polypeptide reads, in one-letter code: Probable potassium transport system protein Kup 1 (613 aa).

Transmembrane regions (helical) follow at residues 40–60 (VLSMLFWSMTLVVSIKYVVFV), 93–113 (MLLGLLGASMFYGDAVITPAI), 127–147 (PALQPWVLPLSLIVLVGLFLL), 158–178 (LFGPVMLFWFVLLGLIGLFSV), 201–221 (AVQAFIVFGSVFLALTGAEAL), 237–257 (WFYIAMPCLLLNYFGQGALLL), 266–286 (PFFLLMPTWAVAPTIVLATAA), 288–308 (VIASQAVISGAFSMTAQAVHL), 327–347 (IYVPVVNYALLLLVVAVVLAF), 356–376 (AYGIAVTTTMLLTTGLVTVVM), 384–404 (LPAVALLGTVFLAVDLSFFGA), and 409–429 (VAAGGWFPLLLGGLIFFLMVT).

It belongs to the HAK/KUP transporter (TC 2.A.72) family.

The protein localises to the cell inner membrane. The enzyme catalyses K(+)(in) + H(+)(in) = K(+)(out) + H(+)(out). Its function is as follows. Transport of potassium into the cell. Likely operates as a K(+):H(+) symporter. The polypeptide is Probable potassium transport system protein Kup 1 (Ralstonia nicotianae (strain ATCC BAA-1114 / GMI1000) (Ralstonia solanacearum)).